Here is a 557-residue protein sequence, read N- to C-terminus: Dihydroxy-acid dehydratase (557 aa).

Aspartate 78 contributes to the Mg(2+) binding site. Cysteine 119 lines the [2Fe-2S] cluster pocket. Positions 120 and 121 each coordinate Mg(2+). Lysine 121 is subject to N6-carboxylysine. Cysteine 194 is a [2Fe-2S] cluster binding site. A Mg(2+)-binding site is contributed by glutamate 446. The active-site Proton acceptor is serine 472.

The protein belongs to the IlvD/Edd family. In terms of assembly, homodimer. The cofactor is [2Fe-2S] cluster. Mg(2+) is required as a cofactor.

The enzyme catalyses (2R)-2,3-dihydroxy-3-methylbutanoate = 3-methyl-2-oxobutanoate + H2O. The catalysed reaction is (2R,3R)-2,3-dihydroxy-3-methylpentanoate = (S)-3-methyl-2-oxopentanoate + H2O. It participates in amino-acid biosynthesis; L-isoleucine biosynthesis; L-isoleucine from 2-oxobutanoate: step 3/4. The protein operates within amino-acid biosynthesis; L-valine biosynthesis; L-valine from pyruvate: step 3/4. Functions in the biosynthesis of branched-chain amino acids. Catalyzes the dehydration of (2R,3R)-2,3-dihydroxy-3-methylpentanoate (2,3-dihydroxy-3-methylvalerate) into 2-oxo-3-methylpentanoate (2-oxo-3-methylvalerate) and of (2R)-2,3-dihydroxy-3-methylbutanoate (2,3-dihydroxyisovalerate) into 2-oxo-3-methylbutanoate (2-oxoisovalerate), the penultimate precursor to L-isoleucine and L-valine, respectively. The sequence is that of Dihydroxy-acid dehydratase from Desulfosudis oleivorans (strain DSM 6200 / JCM 39069 / Hxd3) (Desulfococcus oleovorans).